Here is a 139-residue protein sequence, read N- to C-terminus: Ribulose bisphosphate carboxylase small subunit (139 aa).

This sequence belongs to the RuBisCO small chain family. As to quaternary structure, heterohexadecamer of 8 large and 8 small subunits.

The protein localises to the plastid. Its subcellular location is the chloroplast. Its function is as follows. RuBisCO catalyzes two reactions: the carboxylation of D-ribulose 1,5-bisphosphate, the primary event in carbon dioxide fixation, as well as the oxidative fragmentation of the pentose substrate in the photorespiration process. Both reactions occur simultaneously and in competition at the same active site. Although the small subunit is not catalytic it is essential for maximal activity. The chain is Ribulose bisphosphate carboxylase small subunit from Chrysotila carterae (Marine alga).